The following is a 343-amino-acid chain: Large ribosomal subunit protein uL3 (343 aa).

Disordered stretches follow at residues 1-31 (MGHR…TPRS) and 238-262 (KGSR…PGQM).

The protein belongs to the universal ribosomal protein uL3 family. In terms of assembly, part of the 50S ribosomal subunit. Forms a cluster with proteins L14 and L24e.

Functionally, one of the primary rRNA binding proteins, it binds directly near the 3'-end of the 23S rRNA, where it nucleates assembly of the 50S subunit. This chain is Large ribosomal subunit protein uL3, found in Sulfurisphaera tokodaii (strain DSM 16993 / JCM 10545 / NBRC 100140 / 7) (Sulfolobus tokodaii).